Consider the following 485-residue polypeptide: Sodium-coupled neutral amino acid symporter 1 (485 aa).

The Cytoplasmic portion of the chain corresponds to 1–74; sequence MMHFKSGLEL…EYIPGTTSLG (74 aa). Position 6 is a phosphoserine (Ser6). Thr11 carries the phosphothreonine modification. 4 positions are modified to phosphoserine: Ser25, Ser28, Ser49, and Ser52. Phosphothreonine is present on Thr54. The residue at position 56 (Ser56) is a Phosphoserine. A helical membrane pass occupies residues 75–97; the sequence is MSVFNLSNAIMGSGILGLAFALA. At 98 to 112 the chain is on the extracellular side; the sequence is NTGILLFLILLTSVT. The chain crosses the membrane as a helical span at residues 113–133; sequence LLSIYSINLLLICSKETGCMV. Over 134-148 the chain is Cytoplasmic; it reads YEKLGEQVFGTTGKL. Residues 149 to 169 traverse the membrane as a helical segment; sequence VIFGATSLQNTGAMLSYLFIV. Topologically, residues 170-188 are extracellular; sequence KNELPSAIKSLMGEEDAFS. A helical transmembrane segment spans residues 189-211; sequence AWYVDGRVLVVMVTFGIILPLCL. Topologically, residues 212 to 216 are cytoplasmic; sequence LKNLG. Residues 217-237 traverse the membrane as a helical segment; it reads YLGYTSGFSLSCMMFFLIVVI. Residues 238–273 lie on the Extracellular side of the membrane; it reads YKKFQTPCMSVEQNSTVSANVTDACTPKYVTFNSKT. Cysteines 245 and 262 form a disulfide. Residues Asn251 and Asn257 are each glycosylated (N-linked (GlcNAc...) asparagine). The chain crosses the membrane as a helical span at residues 274–294; the sequence is VYALPTIAFAFVCHPSVLPIY. The Cytoplasmic portion of the chain corresponds to 295–310; the sequence is SELKDRSQKKMQMVSN. Residues 311 to 331 form a helical membrane-spanning segment; the sequence is ISFFAMFVMYFLTAIFGYLTF. The Extracellular segment spans residues 332-348; sequence YEKVQSDLLHKYQSTGD. A helical transmembrane segment spans residues 349–369; sequence ILILTVRLAVIVAVILTVPVL. The Cytoplasmic portion of the chain corresponds to 370–391; the sequence is FFTVRSSLFELAKKTKFHLCRH. Residues 392-412 form a helical membrane-spanning segment; that stretch reads VLVTIILLIIINLLVIFIPSM. The Extracellular segment spans residues 413 to 414; sequence KD. The chain crosses the membrane as a helical span at residues 415 to 435; the sequence is IFGVVGVTSANMLIFILPSSL. Residues 436–450 lie on the Cytoplasmic side of the membrane; it reads YLKITNQDGDKGTQR. Residues 451–471 form a helical membrane-spanning segment; that stretch reads IWAALFLGLGVLFSLISIPLV. Residues 472–485 lie on the Extracellular side of the membrane; the sequence is IYDWACSSGTDEGH.

Belongs to the amino acid/polyamine transporter 2 family. In terms of processing, N-glycosylation plays an important role in the L-glutamine transport. As to expression, specifically expressed in brain and retina (at protein level). Also detected in spleen, small intestine and lung.

Its subcellular location is the cell membrane. The catalysed reaction is L-glutamine(in) + Na(+)(in) = L-glutamine(out) + Na(+)(out). It catalyses the reaction L-alanine(in) + Na(+)(in) = L-alanine(out) + Na(+)(out). It carries out the reaction L-histidine(in) + Na(+)(in) = L-histidine(out) + Na(+)(out). The enzyme catalyses L-asparagine(in) + Na(+)(in) = L-asparagine(out) + Na(+)(out). The catalysed reaction is L-serine(in) + Na(+)(in) = L-serine(out) + Na(+)(out). It catalyses the reaction L-cysteine(in) + Na(+)(in) = L-cysteine(out) + Na(+)(out). It carries out the reaction L-methionine(in) + Na(+)(in) = L-methionine(out) + Na(+)(out). The enzyme catalyses glycine(in) + Na(+)(in) = glycine(out) + Na(+)(out). The catalysed reaction is L-threonine(in) + Na(+)(in) = L-threonine(out) + Na(+)(out). It catalyses the reaction L-proline(in) + Na(+)(in) = L-proline(out) + Na(+)(out). Its activity is regulated as follows. Inhibited by alpha-(methylamino)isobutyric acid (MeAIB). Inhibited by lithium, potassium, choline ions, N-methylglucamine. The pH dependence has an allosteric effect on the transport. Functionally, symporter that cotransports short-chain neutral amino acids and sodium ions from the extraccellular to the intracellular side of the cell membrane. The transport is elctrogenic, pH dependent and driven by the Na(+) electrochemical gradient. Participates in the astroglia-derived glutamine transport into GABAergic interneurons for neurotransmitter GABA de novo synthesis. May also contributes to amino acid transport in placental trophoblast. Regulates synaptic plasticity. The chain is Sodium-coupled neutral amino acid symporter 1 from Mus musculus (Mouse).